A 313-amino-acid polypeptide reads, in one-letter code: MGIKKKRQSKRLTTRKREGMLKRARANERKKRRMDRKMQAKVERIPPSVLRTDEENMQYAEIKRMAKLRKMEYDEALRNSEKKEAYLDGILRLVSKSDVVIEVIDARDPDSSRNSEAEKIVSEHGKKLIMVLNYTQYVPREVVDEWKVHLKRDGNDCIEVTEEDMRQIGKETRIGIFGNPGSGKNFVLRGISRILEEKPNSVVVSVPLSKVTLSSILRGCHGLMGIAFRDYIEAIVKRIDRGEVSLRHGIPEFSNAEELLESICDVHGIRDESRSVCYMKASERFLEDFLRHKILFWRRVYSDENDLSFAFCQ.

The segment covering 1-14 (MGIKKKRQSKRLTT) has biased composition (basic residues). Residues 1-41 (MGIKKKRQSKRLTTRKREGMLKRARANERKKRRMDRKMQAK) are disordered. Residues 15–27 (RKREGMLKRARAN) show a composition bias toward basic and acidic residues. GTP-binding positions include 95-98 (SKSD), 178-185 (GNPGSGKN), and 212-215 (TLSS).

Belongs to the MMR1/HSR1 GTP-binding protein family.

It localises to the nucleus. The protein localises to the nucleolus. Its function is as follows. Required for normal processing of ribosomal pre-rRNA. Required for cell proliferation. Binds GTP. The sequence is that of Guanine nucleotide-binding protein-like 3-like protein from Encephalitozoon cuniculi (strain GB-M1) (Microsporidian parasite).